Reading from the N-terminus, the 2588-residue chain is Histone-lysine N-methyltransferase, H3 lysine-36 specific (2588 aa).

Serine 110 and serine 118 each carry phosphoserine. 2 disordered regions span residues 209-264 and 277-307; these read GSEQ…LGDT and LSFQ…TSQE. Over residues 235–249 the composition is skewed to basic and acidic residues; that stretch reads EKQKNKQRSEVDGSN. Residues 298–307 show a composition bias toward polar residues; that stretch reads GTSSPSTSQE. 2 positions are modified to phosphoserine: serine 380 and serine 383. A disordered region spans residues 383 to 403; that stretch reads SADEKEKPCAKSRVRKSSDNI. A Glycyl lysine isopeptide (Lys-Gly) (interchain with G-Cter in SUMO2) cross-link involves residue lysine 802. Disordered stretches follow at residues 830–899, 947–987, and 1008–1133; these read ASYR…SDKR, ERKR…PGKE, and FDSK…PRLN. The segment covering 855–874 has biased composition (polar residues); that stretch reads GSSTPNSEKPGDSTQDSVHQ. The span at 881 to 895 shows a compositional bias: low complexity; the sequence is SALSGELSSSLSSLA. Residues 1008–1033 show a composition bias toward basic and acidic residues; the sequence is FDSKAKQSDPDKNLEKEPSFENRKGP. Residues 1054–1073 show a composition bias toward basic residues; the sequence is PKKRWQRLNQRRPKPGKRAN. Lysine 1237 is covalently cross-linked (Glycyl lysine isopeptide (Lys-Gly) (interchain with G-Cter in SUMO2)). Residues 1279–1324 form a disordered region; sequence ASPRPALESEELLVKTPGNYESKRQRKPTKKLLESNDLDPGFMPKK. Position 1408 is a phosphoserine (serine 1408). 3 consecutive PHD-type zinc fingers follow at residues 1441–1487, 1488–1544, and 1605–1649; these read ENVC…CHTG, IHTC…CHAA, and VSWC…CKAG. Residues 1654-1716 enclose the PWWP domain; the sequence is YREIVWVKVG…QARVFPYMEG (63 aa). The region spanning 1788 to 1838 is the AWS domain; it reads SEIPRCNCKATDENPCGIDSECINRMLLYECHPTVCPAGVRCQNQCFSKRQ. Positions 1840-1957 constitute an SET domain; sequence PDVEIFRTLQ…AGTELTFNYN (118 aa). S-adenosyl-L-methionine is bound by residues 1850–1852, 1892–1895, 1918–1919, asparagine 1963, and lysine 1969; these read RGW, TNFY, and NH. The segment at 1958–1964 is inhibits enzyme activity in the absence of bound histone; the sequence is LECLGNG. The Post-SET domain occupies 1964 to 1980; the sequence is GKTVCKCGAPNCSGFLG. A disordered region spans residues 1989-2010; the sequence is VTEEKSRKFKRKPHGKRRSQGE. Over residues 1995–2006 the composition is skewed to basic residues; that stretch reads RKFKRKPHGKRR. The PHD-type 4; atypical zinc-finger motif lies at 2016-2063; that stretch reads EDECFSCGDAGQLVSCKKPGCPKVYHADCLNLTKRPAGKWECPWHQCD. 4 disordered regions span residues 2105 to 2320, 2333 to 2423, 2447 to 2521, and 2560 to 2588; these read PCGP…PPPE, KEKA…PSEH, YESA…WGLG, and RGQD…SEKK. Over residues 2179-2196 the composition is skewed to basic and acidic residues; sequence RPPERTDSSSHLLDRIRD. Residues 2201–2212 are compositionally biased toward polar residues; it reads GTKSQSLVSSQR. Basic and acidic residues predominate over residues 2213–2223; sequence PQDRPPAKEGP. Residues 2232–2249 are compositionally biased toward low complexity; it reads SPMTRPSSSPSVSSLPLE. Residues 2250-2261 show a composition bias toward basic and acidic residues; that stretch reads RPLRMTDSRLDK. Residue serine 2267 is modified to Phosphoserine. Threonine 2360 carries the post-translational modification Phosphothreonine. Residue serine 2369 is modified to Phosphoserine. Residue lysine 2509 forms a Glycyl lysine isopeptide (Lys-Gly) (interchain with G-Cter in SUMO2) linkage.

This sequence belongs to the class V-like SAM-binding methyltransferase superfamily. As to quaternary structure, interacts with AR DNA- and ligand-binding domains. Interacts with the ligand-binding domains of RARA and THRA in the absence of ligand; in the presence of ligand the interaction is severely disrupted but some binding still occurs. Interacts with the ligand-binding domains of RXRA and ESRRA only in the presence of ligand. Interacts with ZNF496. As to expression, expressed in the embryo and the outer region of the uterine decidua at early post-implantation 5.5 dpc stage. Uniformly expressed in embryonic and extraembryonic tissues during gastrulation stage 7.5 dpc. Expressed differentially after stage 14.5 dpc with highest expression in proliferating cells. Enriched in the telencephalic region of the brain, spinal cord, intestinal crypt, tooth buds, thymus and salivary glands at stage 16.5 dpc. Also expressed in the ossification region of developing bones and in the periosteum.

It localises to the nucleus. The protein localises to the chromosome. It carries out the reaction L-lysyl(36)-[histone H3] + 2 S-adenosyl-L-methionine = N(6),N(6)-dimethyl-L-lysyl(36)-[histone H3] + 2 S-adenosyl-L-homocysteine + 2 H(+). In terms of biological role, histone methyltransferase that dimethylates Lys-36 of histone H3 (H3K36me2). Transcriptional intermediary factor capable of negatively influencing transcription. May also positively influence transcription. Essential for early post-implantation development. This Mus musculus (Mouse) protein is Histone-lysine N-methyltransferase, H3 lysine-36 specific.